We begin with the raw amino-acid sequence, 431 residues long: Glucose-1-phosphate adenylyltransferase (431 aa).

Lys39 contacts beta-D-fructose 1,6-bisphosphate. AMP is bound by residues Arg40, His46, and Arg52. Tyr114 serves as a coordination point for alpha-D-glucose 1-phosphate. Residue Arg130 participates in AMP binding. Alpha-D-glucose 1-phosphate contacts are provided by residues Gly179, 194–195 (EK), and Ser212. Glu370 and Arg386 together coordinate AMP. Beta-D-fructose 1,6-bisphosphate-binding positions include 419–423 (REMLR) and 429–431 (QER).

The protein belongs to the bacterial/plant glucose-1-phosphate adenylyltransferase family. Homotetramer.

It catalyses the reaction alpha-D-glucose 1-phosphate + ATP + H(+) = ADP-alpha-D-glucose + diphosphate. The protein operates within glycan biosynthesis; glycogen biosynthesis. Allosterically activated by fructose-1,6-bisphosphate (F16BP) and inhibited by AMP. In terms of biological role, involved in the biosynthesis of ADP-glucose, a building block required for the elongation reactions to produce glycogen. Catalyzes the reaction between ATP and alpha-D-glucose 1-phosphate (G1P) to produce pyrophosphate and ADP-Glc. In Escherichia coli O127:H6 (strain E2348/69 / EPEC), this protein is Glucose-1-phosphate adenylyltransferase.